The sequence spans 394 residues: Venom metalloproteinase antarease-like TtrivMP_A (394 aa).

Residues 1–16 form the signal peptide; sequence MISYLASIFLLATVSA. The propeptide occupies 17-158; sequence VPSGRVEVVF…AENVSRMAEE (142 aa). Asparagine 151 carries an N-linked (GlcNAc...) asparagine glycan. One can recognise a Peptidase M12B domain in the interval 162–390; the sequence is IVVEYYIVTD…KPTAFCIFEQ (229 aa). A disulfide bond links cysteine 295 and cysteine 386. Zn(2+) is bound at residue histidine 319. Residue glutamate 320 is part of the active site. 2 residues coordinate Zn(2+): histidine 323 and histidine 329.

This sequence belongs to the venom metalloproteinase (M12B) family. The cofactor is Zn(2+). Expressed by the venom gland.

The protein localises to the secreted. With respect to regulation, inhibited by EDTA. In terms of biological role, acts as a metalloprotease. Penetrates intact tissue and specifically cleaves the vesicle-associated membrane protein 2 (VAMP2) (part of the SNARE complex) involved in pancreatic secretion, thus disrupting the normal vesicular traffic. The protein is Venom metalloproteinase antarease-like TtrivMP_A of Tityus trivittatus (Argentinean scorpion).